The following is a 427-amino-acid chain: Acetylornithine aminotransferase (427 aa).

The segment at 1–23 is disordered; that stretch reads MSLQTLIEQATNPPESGSAASSP. Pyridoxal 5'-phosphate-binding positions include 124-125 and phenylalanine 157; that span reads GA. N(2)-acetyl-L-ornithine is bound at residue arginine 160. Position 248 to 251 (248 to 251) interacts with pyridoxal 5'-phosphate; it reads DEVQ. An N6-(pyridoxal phosphate)lysine modification is found at lysine 277. Serine 304 provides a ligand contact to N(2)-acetyl-L-ornithine. Threonine 305 is a binding site for pyridoxal 5'-phosphate.

It belongs to the class-III pyridoxal-phosphate-dependent aminotransferase family. ArgD subfamily. As to quaternary structure, homodimer. It depends on pyridoxal 5'-phosphate as a cofactor.

The protein resides in the cytoplasm. It carries out the reaction N(2)-acetyl-L-ornithine + 2-oxoglutarate = N-acetyl-L-glutamate 5-semialdehyde + L-glutamate. It participates in amino-acid biosynthesis; L-arginine biosynthesis; N(2)-acetyl-L-ornithine from L-glutamate: step 4/4. In Nostoc sp. (strain PCC 7120 / SAG 25.82 / UTEX 2576), this protein is Acetylornithine aminotransferase.